The following is a 156-amino-acid chain: Small ribosomal subunit protein uS7 (156 aa).

It belongs to the universal ribosomal protein uS7 family. Part of the 30S ribosomal subunit. Contacts proteins S9 and S11.

In terms of biological role, one of the primary rRNA binding proteins, it binds directly to 16S rRNA where it nucleates assembly of the head domain of the 30S subunit. Is located at the subunit interface close to the decoding center, probably blocks exit of the E-site tRNA. This chain is Small ribosomal subunit protein uS7, found in Mycolicibacterium vanbaalenii (strain DSM 7251 / JCM 13017 / BCRC 16820 / KCTC 9966 / NRRL B-24157 / PYR-1) (Mycobacterium vanbaalenii).